We begin with the raw amino-acid sequence, 139 residues long: MALKTLQALIFLGLFAASCLAQAPAPAPITFLPPVESPSPVVTPTAEPPAPVASPPIPANEPTPVPTTPPTVSPPTTSPTTSPVASPPKPYALAPGPSGPTPAPAPAPRADGPVADSALTNKAFLVSTVIAGALYAVLA.

An N-terminal signal peptide occupies residues 1–21 (MALKTLQALIFLGLFAASCLA). Position 22 is a pyrrolidone carboxylic acid (Gln-22). The tract at residues 30–115 (TFLPPVESPS…PAPRADGPVA (86 aa)) is disordered. Pro residues-rich tracts occupy residues 46–77 (AEPP…PPTT) and 97–107 (PSGPTPAPAPA). Asp-116 carries the GPI-anchor amidated aspartate lipid modification. Residues 117–139 (SALTNKAFLVSTVIAGALYAVLA) constitute a propeptide, removed in mature form.

It belongs to the classical AGP family. Post-translationally, O-glycosylated on the hydroxyproline residues. In terms of tissue distribution, expressed at a low level in roots.

Its subcellular location is the cell membrane. Proteoglycan that seems to be implicated in diverse developmental roles such as differentiation, cell-cell recognition, embryogenesis and programmed cell death. The protein is Classical arabinogalactan protein 3 (AGP3) of Arabidopsis thaliana (Mouse-ear cress).